The following is a 168-amino-acid chain: Disulfide bond formation protein B 2 (168 aa).

Residues Met1–Phe9 lie on the Cytoplasmic side of the membrane. Residues Phe10–His26 form a helical membrane-spanning segment. The Periplasmic segment spans residues Leu27–Leu44. A disulfide bond links Cys36 and Cys39. A helical membrane pass occupies residues Met45–Pro61. At Ala62–Arg67 the chain is on the cytoplasmic side. A helical membrane pass occupies residues Ala68–Gly85. At Arg86–Glu140 the chain is on the periplasmic side. A disulfide bridge connects residues Cys100 and Cys126. Residues Trp141–Ala159 traverse the membrane as a helical segment. The Cytoplasmic segment spans residues Tyr160–Ala168.

It belongs to the DsbB family.

The protein resides in the cell inner membrane. Its function is as follows. Required for disulfide bond formation in some periplasmic proteins. Acts by oxidizing the DsbA protein. In Pseudomonas entomophila (strain L48), this protein is Disulfide bond formation protein B 2.